The sequence spans 698 residues: Sulfhydryl oxidase 2 (698 aa).

The N-terminal stretch at 1–21 is a signal peptide; it reads MAAAGAAVARSPGIGAGPALR. In terms of domain architecture, Thioredoxin spans 34–178; it reads PRLLVLLAAA…RQTMIDFLQN (145 aa). Asn-77 is a glycosylation site (N-linked (GlcNAc...) asparagine). Active-site nucleophile residues include Cys-91 and Cys-94. Disulfide bonds link Cys-91-Cys-94 and Cys-122-Cys-131. Asn-178, Asn-218, and Asn-266 each carry an N-linked (GlcNAc...) asparagine glycan. A disulfide bond links Cys-418 and Cys-430. Residues 421 to 530 form the ERV/ALR sulfhydryl oxidase domain; sequence SRSELRGYPC…EDPRFPKLQW (110 aa). FAD is bound by residues Arg-426, Trp-433, His-437, Glu-478, His-482, 505–512, Lys-527, and Trp-530; that span reads WKKHNMVN. A disulfide bond links Cys-476 and Cys-479. A disulfide bridge connects residues Cys-536 and Cys-539. The interval 570 to 624 is disordered; the sequence is TYSADQGDSSEGGTLARGEEEEKRLTPPEVSHGDRDTQSVRPPGALGPRPALPES. Polar residues predominate over residues 572–581; it reads SADQGDSSEG. Ser-579 is subject to Phosphoserine. Residues 586 to 607 show a composition bias toward basic and acidic residues; the sequence is RGEEEEKRLTPPEVSHGDRDTQ. A compositionally biased stretch (low complexity) spans 610–622; that stretch reads RPPGALGPRPALP. Residues 662–682 form a helical membrane-spanning segment; that stretch reads SLCVVLYVASSLFLMVMYFFF.

It belongs to the quiescin-sulfhydryl oxidase (QSOX) family. FAD is required as a cofactor. Expressed in pancreas, brain, placenta, kidney, heart and fetal tissues. Weakly expressed in lung, liver and skeletal muscles.

The protein resides in the membrane. The protein localises to the secreted. It localises to the cell membrane. It is found in the nucleus membrane. It carries out the reaction 2 R'C(R)SH + O2 = R'C(R)S-S(R)CR' + H2O2. Functionally, catalyzes the oxidation of sulfhydryl groups in peptide and protein thiols to disulfides with the reduction of oxygen to hydrogen peroxide. May contribute to disulfide bond formation in a variety of secreted proteins. Also seems to play a role in regulating the sensitization of neuroblastoma cells for interferon-gamma-induced apoptosis. The polypeptide is Sulfhydryl oxidase 2 (QSOX2) (Homo sapiens (Human)).